We begin with the raw amino-acid sequence, 347 residues long: N-acetyl-gamma-glutamyl-phosphate reductase (347 aa).

The active site involves Cys-155.

It belongs to the NAGSA dehydrogenase family. Type 1 subfamily.

The protein localises to the cytoplasm. It carries out the reaction N-acetyl-L-glutamate 5-semialdehyde + phosphate + NADP(+) = N-acetyl-L-glutamyl 5-phosphate + NADPH + H(+). It functions in the pathway amino-acid biosynthesis; L-arginine biosynthesis; N(2)-acetyl-L-ornithine from L-glutamate: step 3/4. Its function is as follows. Catalyzes the NADPH-dependent reduction of N-acetyl-5-glutamyl phosphate to yield N-acetyl-L-glutamate 5-semialdehyde. In Akkermansia muciniphila (strain ATCC BAA-835 / DSM 22959 / JCM 33894 / BCRC 81048 / CCUG 64013 / CIP 107961 / Muc), this protein is N-acetyl-gamma-glutamyl-phosphate reductase.